We begin with the raw amino-acid sequence, 290 residues long: Shikimate dehydrogenase (NADP(+)) (290 aa).

Shikimate is bound by residues 20 to 22 (SLS) and Thr67. Lys71 serves as the catalytic Proton acceptor. Residues Asn92 and Asp107 each coordinate shikimate. NADP(+) contacts are provided by residues 130–134 (GAGGA) and Leu227. Tyr229 is a shikimate binding site. Position 250 (Gly250) interacts with NADP(+).

It belongs to the shikimate dehydrogenase family. Homodimer.

It carries out the reaction shikimate + NADP(+) = 3-dehydroshikimate + NADPH + H(+). The protein operates within metabolic intermediate biosynthesis; chorismate biosynthesis; chorismate from D-erythrose 4-phosphate and phosphoenolpyruvate: step 4/7. Its function is as follows. Involved in the biosynthesis of the chorismate, which leads to the biosynthesis of aromatic amino acids. Catalyzes the reversible NADPH linked reduction of 3-dehydroshikimate (DHSA) to yield shikimate (SA). The chain is Shikimate dehydrogenase (NADP(+)) from Syntrophomonas wolfei subsp. wolfei (strain DSM 2245B / Goettingen).